Consider the following 505-residue polypeptide: Probable cytosol aminopeptidase (505 aa).

Residues lysine 269 and aspartate 274 each coordinate Mn(2+). Lysine 281 is a catalytic residue. Positions 292, 351, and 353 each coordinate Mn(2+). The active site involves arginine 355.

This sequence belongs to the peptidase M17 family. Mn(2+) is required as a cofactor.

The protein resides in the cytoplasm. The enzyme catalyses Release of an N-terminal amino acid, Xaa-|-Yaa-, in which Xaa is preferably Leu, but may be other amino acids including Pro although not Arg or Lys, and Yaa may be Pro. Amino acid amides and methyl esters are also readily hydrolyzed, but rates on arylamides are exceedingly low.. It catalyses the reaction Release of an N-terminal amino acid, preferentially leucine, but not glutamic or aspartic acids.. Its function is as follows. Presumably involved in the processing and regular turnover of intracellular proteins. Catalyzes the removal of unsubstituted N-terminal amino acids from various peptides. The chain is Probable cytosol aminopeptidase from Rhodococcus erythropolis (strain PR4 / NBRC 100887).